The following is a 448-amino-acid chain: Probable glycine dehydrogenase (decarboxylating) subunit 1 (448 aa).

The protein belongs to the GcvP family. N-terminal subunit subfamily. As to quaternary structure, the glycine cleavage system is composed of four proteins: P, T, L and H. In this organism, the P 'protein' is a heterodimer of two subunits.

The enzyme catalyses N(6)-[(R)-lipoyl]-L-lysyl-[glycine-cleavage complex H protein] + glycine + H(+) = N(6)-[(R)-S(8)-aminomethyldihydrolipoyl]-L-lysyl-[glycine-cleavage complex H protein] + CO2. Functionally, the glycine cleavage system catalyzes the degradation of glycine. The P protein binds the alpha-amino group of glycine through its pyridoxal phosphate cofactor; CO(2) is released and the remaining methylamine moiety is then transferred to the lipoamide cofactor of the H protein. This is Probable glycine dehydrogenase (decarboxylating) subunit 1 from Listeria innocua serovar 6a (strain ATCC BAA-680 / CLIP 11262).